A 222-amino-acid polypeptide reads, in one-letter code: Octanoyltransferase (222 aa).

The 176-residue stretch at 35–210 (ETTPDELWLV…EFVHLLGYPK (176 aa)) folds into the BPL/LPL catalytic domain. Residues 74–81 (RGGQVTYH), 141–143 (SLG), and 154–156 (GLA) contribute to the substrate site. The Acyl-thioester intermediate role is filled by C172.

This sequence belongs to the LipB family.

Its subcellular location is the cytoplasm. It catalyses the reaction octanoyl-[ACP] + L-lysyl-[protein] = N(6)-octanoyl-L-lysyl-[protein] + holo-[ACP] + H(+). It participates in protein modification; protein lipoylation via endogenous pathway; protein N(6)-(lipoyl)lysine from octanoyl-[acyl-carrier-protein]: step 1/2. Catalyzes the transfer of endogenously produced octanoic acid from octanoyl-acyl-carrier-protein onto the lipoyl domains of lipoate-dependent enzymes. Lipoyl-ACP can also act as a substrate although octanoyl-ACP is likely to be the physiological substrate. The polypeptide is Octanoyltransferase (Serratia proteamaculans (strain 568)).